A 70-amino-acid chain; its full sequence is MKADIHPNYVEIDATCSCGNVIKTRSTIGKNISLDVCSECHPFYTGKQKVLDTGGRIDRFKQRFGVFGAK.

Zn(2+) is bound by residues Cys16, Cys18, Cys37, and Cys40.

This sequence belongs to the bacterial ribosomal protein bL31 family. Type A subfamily. As to quaternary structure, part of the 50S ribosomal subunit. Zn(2+) is required as a cofactor.

Functionally, binds the 23S rRNA. The protein is Large ribosomal subunit protein bL31 of Ectopseudomonas mendocina (strain ymp) (Pseudomonas mendocina).